A 1030-amino-acid polypeptide reads, in one-letter code: Protein KRBA1 (1030 aa).

Disordered stretches follow at residues E27 to R56, K80 to L208, H225 to P255, E281 to N505, and G634 to S788. The residue at position 101 (S101) is a Phosphoserine. A compositionally biased stretch (low complexity) spans P102–R114. A compositionally biased stretch (polar residues) spans P124–P143. A compositionally biased stretch (basic and acidic residues) spans T157–G168. S177, S182, S184, S229, S253, and S355 each carry phosphoserine. Positions P372 to A389 are enriched in low complexity. The segment covering N397–S418 has biased composition (polar residues). The span at R419–R437 shows a compositional bias: basic and acidic residues. Low complexity-rich tracts occupy residues Q485 to G502 and P642 to S651. Positions E654–P674 are enriched in basic and acidic residues. A compositionally biased stretch (gly residues) spans T689–P698. A compositionally biased stretch (pro residues) spans Q760–L784. Residues L799–R832 adopt a coiled-coil conformation. Basic residues predominate over residues R870 to I887. Positions R870–H1030 are disordered. Residues P913–P923 show a composition bias toward pro residues. Low complexity-rich tracts occupy residues S929–H953 and P966–D984. The segment covering G1019–H1030 has biased composition (basic and acidic residues).

Expressed in brain (cerebellum).

This Homo sapiens (Human) protein is Protein KRBA1 (KRBA1).